A 125-amino-acid polypeptide reads, in one-letter code: Large ribosomal subunit protein bL17 (125 aa).

This sequence belongs to the bacterial ribosomal protein bL17 family. As to quaternary structure, part of the 50S ribosomal subunit. Contacts protein L32.

This chain is Large ribosomal subunit protein bL17, found in Acinetobacter baumannii (strain AB307-0294).